Reading from the N-terminus, the 157-residue chain is 2-C-methyl-D-erythritol 2,4-cyclodiphosphate synthase (157 aa).

A divalent metal cation contacts are provided by D8 and H10. 4-CDP-2-C-methyl-D-erythritol 2-phosphate-binding positions include 8-10 (DVH) and 34-35 (HS). H42 lines the a divalent metal cation pocket. Residues 56-58 (DIG), 61-65 (FPDSD), 132-135 (TTTE), F139, and R142 each bind 4-CDP-2-C-methyl-D-erythritol 2-phosphate.

This sequence belongs to the IspF family. As to quaternary structure, homotrimer. A divalent metal cation serves as cofactor.

It carries out the reaction 4-CDP-2-C-methyl-D-erythritol 2-phosphate = 2-C-methyl-D-erythritol 2,4-cyclic diphosphate + CMP. It functions in the pathway isoprenoid biosynthesis; isopentenyl diphosphate biosynthesis via DXP pathway; isopentenyl diphosphate from 1-deoxy-D-xylulose 5-phosphate: step 4/6. In terms of biological role, involved in the biosynthesis of isopentenyl diphosphate (IPP) and dimethylallyl diphosphate (DMAPP), two major building blocks of isoprenoid compounds. Catalyzes the conversion of 4-diphosphocytidyl-2-C-methyl-D-erythritol 2-phosphate (CDP-ME2P) to 2-C-methyl-D-erythritol 2,4-cyclodiphosphate (ME-CPP) with a corresponding release of cytidine 5-monophosphate (CMP). This is 2-C-methyl-D-erythritol 2,4-cyclodiphosphate synthase from Syntrophomonas wolfei subsp. wolfei (strain DSM 2245B / Goettingen).